The chain runs to 640 residues: Probable potassium transport system protein Kup 2 (640 aa).

The segment at 1 to 20 is disordered; it reads MTADIAATPAETPATNGHGD. A run of 12 helical transmembrane segments spans residues 30 to 50, 71 to 91, 117 to 137, 155 to 175, 183 to 203, 224 to 244, 265 to 285, 294 to 314, 363 to 383, 385 to 405, 410 to 430, and 437 to 457; these read LTLG…LYAL, VVSL…VVIL, ASII…DAVI, AAFD…LFAV, VAAF…IAAF, FMLH…LAVT, WLFV…ALVI, PFFL…ATVA, LLLV…ALAS, YGIS…VVIW, WSPI…LTFL, and VLEG…LMYT.

The protein belongs to the HAK/KUP transporter (TC 2.A.72) family.

The protein localises to the cell inner membrane. It carries out the reaction K(+)(in) + H(+)(in) = K(+)(out) + H(+)(out). Transport of potassium into the cell. Likely operates as a K(+):H(+) symporter. The protein is Probable potassium transport system protein Kup 2 of Bradyrhizobium sp. (strain ORS 278).